The following is a 177-amino-acid chain: Large ribosomal subunit protein uL6 (177 aa).

It belongs to the universal ribosomal protein uL6 family. Part of the 50S ribosomal subunit.

This protein binds to the 23S rRNA, and is important in its secondary structure. It is located near the subunit interface in the base of the L7/L12 stalk, and near the tRNA binding site of the peptidyltransferase center. The chain is Large ribosomal subunit protein uL6 from Azorhizobium caulinodans (strain ATCC 43989 / DSM 5975 / JCM 20966 / LMG 6465 / NBRC 14845 / NCIMB 13405 / ORS 571).